A 185-amino-acid chain; its full sequence is MIDEILFDSEERMSNTVEHTREDLITIRTGRANPAMFNGVLAEYYGVPTPITQMSSISVPEPRMLIIKPYEMSSMGVIENAIRNSDLGVNPTNDGQVLRVTIPQLTEERRRDMVKIAKGKGEDGKIAIRNVRRKGMEQLKKLQKDGEFGEDEVAAAEKELDKITAHYVEQVDEIVARKEAELMEV.

This sequence belongs to the RRF family.

The protein localises to the cytoplasm. Its function is as follows. Responsible for the release of ribosomes from messenger RNA at the termination of protein biosynthesis. May increase the efficiency of translation by recycling ribosomes from one round of translation to another. The sequence is that of Ribosome-recycling factor from Corynebacterium efficiens (strain DSM 44549 / YS-314 / AJ 12310 / JCM 11189 / NBRC 100395).